Here is a 357-residue protein sequence, read N- to C-terminus: Membrane-bound lytic murein transglycosylase C (357 aa).

Positions 1 to 15 (MKKYLLLALLPFLYA) are cleaved as a signal peptide. Cys16 is lipidated: N-palmitoyl cysteine. Cys16 carries S-diacylglycerol cysteine lipidation.

Belongs to the transglycosylase Slt family.

The protein resides in the cell outer membrane. The enzyme catalyses Exolytic cleavage of the (1-&gt;4)-beta-glycosidic linkage between N-acetylmuramic acid (MurNAc) and N-acetylglucosamine (GlcNAc) residues in peptidoglycan, from either the reducing or the non-reducing ends of the peptidoglycan chains, with concomitant formation of a 1,6-anhydrobond in the MurNAc residue.. Its function is as follows. Murein-degrading enzyme. May play a role in recycling of muropeptides during cell elongation and/or cell division. The protein is Membrane-bound lytic murein transglycosylase C of Haemophilus influenzae (strain PittEE).